The primary structure comprises 363 residues: Alanine racemase (363 aa).

Catalysis depends on Lys39, which acts as the Proton acceptor; specific for D-alanine. At Lys39 the chain carries N6-(pyridoxal phosphate)lysine. Arg134 contributes to the substrate binding site. The active-site Proton acceptor; specific for L-alanine is Tyr251. Met299 provides a ligand contact to substrate.

Belongs to the alanine racemase family. Requires pyridoxal 5'-phosphate as cofactor.

It carries out the reaction L-alanine = D-alanine. It participates in amino-acid biosynthesis; D-alanine biosynthesis; D-alanine from L-alanine: step 1/1. Functionally, catalyzes the interconversion of L-alanine and D-alanine. May also act on other amino acids. The polypeptide is Alanine racemase (alr) (Thermodesulfovibrio yellowstonii (strain ATCC 51303 / DSM 11347 / YP87)).